The following is a 505-amino-acid chain: Ribose import ATP-binding protein RbsA (505 aa).

2 consecutive ABC transporter domains span residues 12-249 and 259-504; these read LQMK…VGRK and VKKG…VAFS. 44–51 lines the ATP pocket; it reads GENGAGKS.

Belongs to the ABC transporter superfamily. Ribose importer (TC 3.A.1.2.1) family. As to quaternary structure, the complex is composed of an ATP-binding protein (RbsA), two transmembrane proteins (RbsC) and a solute-binding protein (RbsB).

It is found in the cell membrane. It carries out the reaction D-ribose(out) + ATP + H2O = D-ribose(in) + ADP + phosphate + H(+). Functionally, part of the ABC transporter complex RbsABC involved in ribose import. Responsible for energy coupling to the transport system. In Clostridium tetani (strain Massachusetts / E88), this protein is Ribose import ATP-binding protein RbsA.